The sequence spans 698 residues: UvrABC system protein B (698 aa).

The region spanning 25–183 (NGLNSGLVHQ…TLIDLQFERN (159 aa)) is the Helicase ATP-binding domain. ATP is bound at residue 38-45 (GATGTGKT). A Beta-hairpin motif is present at residues 91–114 (YYDAYTPEAYVPSKDLYIEKEAQI). The 167-residue stretch at 428 to 594 (QIDDLLGEIK…GIVKAVRDLT (167 aa)) folds into the Helicase C-terminal domain. In terms of domain architecture, UVR spans 622–657 (FKVINALEKQMKQAAKDLEFEKAALLRDQLTEMRQT).

The protein belongs to the UvrB family. In terms of assembly, forms a heterotetramer with UvrA during the search for lesions. Interacts with UvrC in an incision complex.

It localises to the cytoplasm. In terms of biological role, the UvrABC repair system catalyzes the recognition and processing of DNA lesions. A damage recognition complex composed of 2 UvrA and 2 UvrB subunits scans DNA for abnormalities. Upon binding of the UvrA(2)B(2) complex to a putative damaged site, the DNA wraps around one UvrB monomer. DNA wrap is dependent on ATP binding by UvrB and probably causes local melting of the DNA helix, facilitating insertion of UvrB beta-hairpin between the DNA strands. Then UvrB probes one DNA strand for the presence of a lesion. If a lesion is found the UvrA subunits dissociate and the UvrB-DNA preincision complex is formed. This complex is subsequently bound by UvrC and the second UvrB is released. If no lesion is found, the DNA wraps around the other UvrB subunit that will check the other stand for damage. This chain is UvrABC system protein B, found in Herpetosiphon aurantiacus (strain ATCC 23779 / DSM 785 / 114-95).